Here is a 360-residue protein sequence, read N- to C-terminus: Peptide chain release factor 1 (360 aa).

Position 235 is an N5-methylglutamine (glutamine 235). The interval 285-311 (KRQQAQASERRNLLGSGDRSDRHRTYN) is disordered. Positions 292–308 (SERRNLLGSGDRSDRHR) are enriched in basic and acidic residues.

It belongs to the prokaryotic/mitochondrial release factor family. In terms of processing, methylated by PrmC. Methylation increases the termination efficiency of RF1.

Its subcellular location is the cytoplasm. Peptide chain release factor 1 directs the termination of translation in response to the peptide chain termination codons UAG and UAA. The sequence is that of Peptide chain release factor 1 from Hamiltonella defensa subsp. Acyrthosiphon pisum (strain 5AT).